The chain runs to 819 residues: Outer membrane usher protein CssD (819 aa).

Belongs to the fimbrial export usher family.

Its subcellular location is the cell outer membrane. Functionally, involved in the export and assembly of C6 fimbrial subunits across the outer membrane. In Escherichia coli, this protein is Outer membrane usher protein CssD (cssD).